The following is a 166-amino-acid chain: MELYIVDEREGVTKAPEMEESWQLMLEQLAFACLEEVGYPLEDTEISLVLTNDEKIRRLNAEYRNIDQPTDVLSFAMEEGLDDEADFHFDDPTAGKVLGDIIISVETAERQAQEYGHSLEREMGFLFVHGMLHLLGYDHCDEEQRSRMRALEEKILRNQGLQREWT.

3 residues coordinate Zn(2+): His-129, His-133, and His-139.

Belongs to the endoribonuclease YbeY family. It depends on Zn(2+) as a cofactor.

The protein resides in the cytoplasm. Single strand-specific metallo-endoribonuclease involved in late-stage 70S ribosome quality control and in maturation of the 3' terminus of the 16S rRNA. In Heliobacterium modesticaldum (strain ATCC 51547 / Ice1), this protein is Endoribonuclease YbeY.